The primary structure comprises 238 residues: Large ribosomal subunit protein uL1 (238 aa).

This sequence belongs to the universal ribosomal protein uL1 family. Part of the 50S ribosomal subunit.

Its function is as follows. Binds directly to 23S rRNA. The L1 stalk is quite mobile in the ribosome, and is involved in E site tRNA release. Protein L1 is also a translational repressor protein, it controls the translation of the L11 operon by binding to its mRNA. The polypeptide is Large ribosomal subunit protein uL1 (Salinispora tropica (strain ATCC BAA-916 / DSM 44818 / JCM 13857 / NBRC 105044 / CNB-440)).